The sequence spans 342 residues: tRNA N6-adenosine threonylcarbamoyltransferase (342 aa).

Fe cation contacts are provided by His-115 and His-119. Residues 138–142 (IISGG), Asp-171, Gly-184, Asp-188, and Asn-276 contribute to the substrate site. Asp-304 serves as a coordination point for Fe cation.

It belongs to the KAE1 / TsaD family. Fe(2+) is required as a cofactor.

It is found in the cytoplasm. The catalysed reaction is L-threonylcarbamoyladenylate + adenosine(37) in tRNA = N(6)-L-threonylcarbamoyladenosine(37) in tRNA + AMP + H(+). Its function is as follows. Required for the formation of a threonylcarbamoyl group on adenosine at position 37 (t(6)A37) in tRNAs that read codons beginning with adenine. Is involved in the transfer of the threonylcarbamoyl moiety of threonylcarbamoyl-AMP (TC-AMP) to the N6 group of A37, together with TsaE and TsaB. TsaD likely plays a direct catalytic role in this reaction. The chain is tRNA N6-adenosine threonylcarbamoyltransferase from Endomicrobium trichonymphae.